The following is a 203-amino-acid chain: MKKLILIGCLMAGMNINVAWANASQNLQERLGKVNSFHASFTQTVTSDDGATIQEGEGQLWVKRPNLFNWHMTSPDESVLVSDGKTLWFYNPFVEQVTANWLKDATGNTPFMLITRNDAKEWSQYKISQQGNDFELTPNNVTGNLKRFSITVTTDGTIQKFSAIEQDGQKSAYQLKGQQNTHVDAAKFSFTLPKGVTLDDQRQ.

A signal peptide spans 1-21 (MKKLILIGCLMAGMNINVAWA).

This sequence belongs to the LolA family. In terms of assembly, monomer.

It localises to the periplasm. Its function is as follows. Participates in the translocation of lipoproteins from the inner membrane to the outer membrane. Only forms a complex with a lipoprotein if the residue after the N-terminal Cys is not an aspartate (The Asp acts as a targeting signal to indicate that the lipoprotein should stay in the inner membrane). The chain is Outer-membrane lipoprotein carrier protein from Photorhabdus laumondii subsp. laumondii (strain DSM 15139 / CIP 105565 / TT01) (Photorhabdus luminescens subsp. laumondii).